Reading from the N-terminus, the 372-residue chain is tRNA-specific 2-thiouridylase MnmA (372 aa).

ATP is bound by residues 6–13 and Leu32; that span reads AMSGGVDS. Cys101 (nucleophile) is an active-site residue. A disulfide bond links Cys101 and Cys193. Residue Gly125 coordinates ATP. The segment at 143–145 is interaction with tRNA; that stretch reads KDQ. The active-site Cysteine persulfide intermediate is the Cys193.

Belongs to the MnmA/TRMU family.

The protein resides in the cytoplasm. The catalysed reaction is S-sulfanyl-L-cysteinyl-[protein] + uridine(34) in tRNA + AH2 + ATP = 2-thiouridine(34) in tRNA + L-cysteinyl-[protein] + A + AMP + diphosphate + H(+). In terms of biological role, catalyzes the 2-thiolation of uridine at the wobble position (U34) of tRNA, leading to the formation of s(2)U34. This chain is tRNA-specific 2-thiouridylase MnmA, found in Corynebacterium kroppenstedtii (strain DSM 44385 / JCM 11950 / CIP 105744 / CCUG 35717).